We begin with the raw amino-acid sequence, 806 residues long: Transitional endoplasmic reticulum ATPase (806 aa).

Alanine 2 carries the N-acetylalanine modification. 2 positions are modified to phosphoserine: serine 3 and serine 7. Lysine 8 is covalently cross-linked (Glycyl lysine isopeptide (Lys-Gly) (interchain with G-Cter in SUMO2)). Position 13 is a phosphoserine (serine 13). Lysine 18 is covalently cross-linked (Glycyl lysine isopeptide (Lys-Gly) (interchain with G-Cter in SUMO2)). Serine 37 bears the Phosphoserine mark. 247–253 (PGTGKTL) serves as a coordination point for ATP. Lysine 315 carries the post-translational modification N6,N6,N6-trimethyllysine; by VCPKMT. ATP is bound by residues asparagine 348 and histidine 384. Phosphothreonine is present on threonine 436. Serine 462 bears the Phosphoserine mark. Residues lysine 502 and lysine 505 each carry the N6-acetyllysine modification. Residue 521–526 (GCGKTL) coordinates ATP. An N6-acetyllysine; alternate modification is found at lysine 668. Lysine 668 bears the N6-succinyllysine; alternate mark. The residue at position 702 (serine 702) is a Phosphoserine. Positions 708–727 (RRERERQTNPSAMEVEEDDP) are disordered. Residue lysine 754 is modified to N6-acetyllysine. The interval 768–806 (FGSFRFPSGNQGGAGPSQGSGGGTGGNVYTEDNDDDLYG) is disordered. Phosphoserine occurs at positions 770, 775, and 787. Gly residues predominate over residues 777-793 (NQGGAGPSQGSGGGTGG). The segment at 797–806 (TEDNDDDLYG) is interaction with UBXN6. Positions 802 to 806 (DDLYG) match the PIM motif motif. At tyrosine 805 the chain carries Phosphotyrosine.

This sequence belongs to the AAA ATPase family. In terms of assembly, homohexamer. Forms a ring-shaped particle of 12.5 nm diameter, that displays 6-fold radial symmetry. Part of a ternary complex containing STX5A, NSFL1C and VCP. NSFL1C forms a homotrimer that binds to one end of a VCP homohexamer. The complex binds to membranes enriched in phosphatidylethanolamine-containing lipids and promotes Golgi membrane fusion. Binds to a heterodimer of NPLOC4 and UFD1, binding to this heterodimer inhibits Golgi-membrane fusion. Interaction with VCIP135 leads to dissociation of the complex via ATP hydrolysis by VCP. Part of a ternary complex containing NPLOC4, UFD1 and VCP. Interacts with NSFL1C-like protein p37; the complex has membrane fusion activity and is required for Golgi and endoplasmic reticulum biogenesis. Interacts with SELENOS and SYVN1, as well as with DERL1 (via SHP-box motif), DERL2 and DERL3; which probably transfer misfolded proteins from the ER to VCP. Interacts with SVIP and DERL1. Component of a complex required to couple retrotranslocation, ubiquitination and deglycosylation composed of NGLY1, SAKS1, AMFR, VCP and RAD23B. Part of a complex composed of STUB1/CHIP, VCP/p97, CHRNA3, and UBXN2A that modulates the ubiquitination and endoplasmic reticulum-associated degradation (ERAD) of CHRNA3. Within the complex UBXN2A acts as a scaffold protein required for the interaction of CHRNA3 with VCP/p97, this interaction also inhibits CHRNA3 ubiquitination by STUB1/CHIP and subsequently ERAD. Interacts with UBXN2A (via UBX domain); the interaction is required for the interaction of CHRNA3 in the STUB1-VCP-UBXN2A complex. Directly interacts with UBXN4 and RNF19A. Interacts with CASR. Interacts with UBE4B and YOD1. Interacts with clathrin. Interacts with RNF103. Interacts with TRIM13 and TRIM21. Component of a VCP/p97-AMFR/gp78 complex that participates in the final step of the endoplasmic reticulum-associated degradation (ERAD) of HMGCR. Interacts directly with AMFR/gp78 (via its VIM). Interacts with RHBDD1 (via C-terminal domain). Interacts with SPRTN; leading to recruitment to stalled replication forks. Interacts with WASHC5. Interacts with UBOX5. Interacts (via N-terminus) with UBXN7, UBXN8, and probably several other UBX domain-containing proteins (via UBX domains); the interactions are mutually exclusive with VIM-dependent interactions such as those with AMFR and SELENOS. Forms a complex with UBQLN1 and UBXN4. Interacts (via the PIM motif) with RNF31 (via the PUB domain). Interacts with RIGI and RNF125; interaction takes place when RIGI is ubiquitinated via 'Lys-63'-linked ubiquitin on its CARD domains, leading to recruit RNF125 and promote ubiquitination and degradation of RIGI. Interacts with BAG6. Interacts with UBXN10. Interacts with UBXN6; the interaction with UBXN6 is direct and competitive with UFD1. Forms a ternary complex with CAV1 and UBXN6. Interacts with PLAA, UBXN6 and YOD1; may form a complex involved in macroautophagy. Interacts with ANKZF1. Interacts with ubiquitin-binding protein FAF1. Interacts with ZFAND2B (via VIM motif); the interaction is direct. Interacts with ZFAND1 (via its ubiquitin-like region); this interaction occurs in an arsenite-dependent manner. Interacts with CCDC47. Interacts with LMBR1L and UBAC2. Interacts with ATXN3. Interacts with TEX264; bridging VCP to covalent DNA-protein cross-links (DPCs). In terms of processing, ISGylated. Post-translationally, methylation at Lys-315 catalyzed by VCPKMT is increased in the presence of ASPSCR1. Lys-315 methylation may decrease ATPase activity. Phosphorylated by tyrosine kinases in response to T-cell antigen receptor activation. Phosphorylated in mitotic cells.

It localises to the cytoplasm. The protein localises to the cytosol. Its subcellular location is the endoplasmic reticulum. It is found in the nucleus. The protein resides in the stress granule. It catalyses the reaction ATP + H2O = ADP + phosphate + H(+). Functionally, necessary for the fragmentation of Golgi stacks during mitosis and for their reassembly after mitosis. Involved in the formation of the transitional endoplasmic reticulum (tER). The transfer of membranes from the endoplasmic reticulum to the Golgi apparatus occurs via 50-70 nm transition vesicles which derive from part-rough, part-smooth transitional elements of the endoplasmic reticulum (tER). Vesicle budding from the tER is an ATP-dependent process. The ternary complex containing UFD1, VCP and NPLOC4 binds ubiquitinated proteins and is necessary for the export of misfolded proteins from the ER to the cytoplasm, where they are degraded by the proteasome. The NPLOC4-UFD1-VCP complex regulates spindle disassembly at the end of mitosis and is necessary for the formation of a closed nuclear envelope. Regulates E3 ubiquitin-protein ligase activity of RNF19A. Component of the VCP/p97-AMFR/gp78 complex that participates in the final step of the sterol-mediated ubiquitination and endoplasmic reticulum-associated degradation (ERAD) of HMGCR. Mediates the endoplasmic reticulum-associated degradation of CHRNA3 in cortical neurons as part of the STUB1-VCP-UBXN2A complex. Involved in endoplasmic reticulum stress-induced pre-emptive quality control, a mechanism that selectively attenuates the translocation of newly synthesized proteins into the endoplasmic reticulum and reroutes them to the cytosol for proteasomal degradation. Involved in clearance process by mediating G3BP1 extraction from stress granules. Also involved in DNA damage response: recruited to double-strand breaks (DSBs) sites in a RNF8- and RNF168-dependent manner and promotes the recruitment of TP53BP1 at DNA damage sites. Recruited to stalled replication forks by SPRTN: may act by mediating extraction of DNA polymerase eta (POLH) to prevent excessive translesion DNA synthesis and limit the incidence of mutations induced by DNA damage. Together with SPRTN metalloprotease, involved in the repair of covalent DNA-protein cross-links (DPCs) during DNA synthesis. Involved in interstrand cross-link repair in response to replication stress by mediating unloading of the ubiquitinated CMG helicase complex. Mediates extraction of PARP1 trapped to chromatin: recognizes and binds ubiquitinated PARP1 and promotes its removal. Required for cytoplasmic retrotranslocation of stressed/damaged mitochondrial outer-membrane proteins and their subsequent proteasomal degradation. Essential for the maturation of ubiquitin-containing autophagosomes and the clearance of ubiquitinated protein by autophagy. Acts as a negative regulator of type I interferon production by interacting with RIGI: interaction takes place when RIGI is ubiquitinated via 'Lys-63'-linked ubiquitin on its CARD domains, leading to recruit RNF125 and promote ubiquitination and degradation of RIGI. May play a role in the ubiquitin-dependent sorting of membrane proteins to lysosomes where they undergo degradation. May more particularly play a role in caveolins sorting in cells. By controlling the steady-state expression of the IGF1R receptor, indirectly regulates the insulin-like growth factor receptor signaling pathway. This chain is Transitional endoplasmic reticulum ATPase (VCP), found in Bos taurus (Bovine).